Here is a 134-residue protein sequence, read N- to C-terminus: Large ribosomal subunit protein bL12 (134 aa).

This sequence belongs to the bacterial ribosomal protein bL12 family. Homodimer. Part of the ribosomal stalk of the 50S ribosomal subunit. Forms a multimeric L10(L12)X complex, where L10 forms an elongated spine to which 2 to 4 L12 dimers bind in a sequential fashion. Binds GTP-bound translation factors.

Its function is as follows. Forms part of the ribosomal stalk which helps the ribosome interact with GTP-bound translation factors. Is thus essential for accurate translation. This chain is Large ribosomal subunit protein bL12, found in Anaplasma phagocytophilum (strain HZ).